Consider the following 1958-residue polypeptide: Echinoderm microtubule-associated protein-like 6 (1958 aa).

WD repeat units follow at residues glycine 59 to isoleucine 100, valine 104 to serine 145, glycine 148 to lysine 187, glycine 195 to glutamine 233, alanine 235 to aspartate 273, glycine 280 to glutamine 321, histidine 323 to arginine 362, asparagine 364 to histidine 403, aspartate 406 to glycine 445, and glycine 561 to glycine 601. Residues glutamate 604–proline 627 are disordered. Positions tyrosine 615–proline 627 are enriched in acidic residues. 10 WD repeats span residues glycine 725 to leucine 766, histidine 770 to threonine 811, glycine 814 to lysine 853, glycine 861 to lysine 900, alanine 901 to alanine 940, histidine 996 to alanine 1035, lysine 1038 to serine 1077, histidine 1080 to isoleucine 1120, serine 1191 to arginine 1230, and glycine 1236 to serine 1276. Residues lysine 1322–proline 1337 show a composition bias toward basic and acidic residues. A disordered region spans residues lysine 1322 to asparagine 1352. 10 WD repeats span residues glutamate 1412 to methionine 1456, phenylalanine 1460 to serine 1501, glycine 1504 to lysine 1543, alanine 1553 to alanine 1591, alanine 1593 to phenylalanine 1638, histidine 1685 to lysine 1724, asparagine 1726 to arginine 1767, aspartate 1768 to arginine 1807, alanine 1880 to lysine 1919, and glycine 1925 to leucine 1958.

The protein belongs to the WD repeat EMAP family.

Its subcellular location is the cytoplasm. It is found in the cytoskeleton. Its function is as follows. May modify the assembly dynamics of microtubules, such that microtubules are slightly longer, but more dynamic. The protein is Echinoderm microtubule-associated protein-like 6 (Eml6) of Mus musculus (Mouse).